We begin with the raw amino-acid sequence, 815 residues long: Tubulin polyglutamylase TTLL13 (815 aa).

Positions 85-430 (RRSLAINLTN…RGCDKRKVME (346 aa)) constitute a TTL domain. ATP is bound by residues lysine 202, 208-209 (QG), 230-233 (QQYI), and 243-245 (KFD). Residue glutamine 208 coordinates a protein. Residue arginine 269 participates in L-glutamate binding. 291 to 292 (TN) contacts ATP. Residues tyrosine 293 and lysine 311 each coordinate L-glutamate. Mg(2+)-binding residues include aspartate 376, glutamate 389, and asparagine 391. The c-MTBD region stretch occupies residues 401–482 (CLDQEVKDAL…LGKYRRIYPG (82 aa)). Lysine 407 provides a ligand contact to L-glutamate. A coiled-coil region spans residues 504–528 (ASKAREECARQQLEEIRLKQEQQET). Positions 520–556 (RLKQEQQETSGTKRQKARDQNQGESAGEKSRPRAGLQ) are disordered. Over residues 536–550 (ARDQNQGESAGEKSR) the composition is skewed to basic and acidic residues.

The protein belongs to the tubulin--tyrosine ligase family. It depends on Mg(2+) as a cofactor.

It catalyses the reaction (L-glutamyl)(n)-gamma-L-glutamyl-L-glutamyl-[protein] + L-glutamate + ATP = (L-glutamyl)(n+1)-gamma-L-glutamyl-L-glutamyl-[protein] + ADP + phosphate + H(+). Its function is as follows. Polyglutamylase which modifies tubulin, generating polyglutamate side chains of variable lengths on the gamma-carboxyl group of specific glutamate residues within the C-terminal tail of tubulin. Mediates ATP-dependent polyglutamate side-chain elongation of the polyglutamylation reaction but not the initiation step. Preferentially modifies the alpha-tubulin tail over a beta-tail. In Homo sapiens (Human), this protein is Tubulin polyglutamylase TTLL13.